Consider the following 348-residue polypeptide: MNRTDELRTARIDSLVTPTELAQRYPVSSSVASHVTDSRRRIEKILNGEDPRLLVVIGPCSIHDLNAAMEYATQLQAQRQKHQARLEIVMRTYFEKPRTVVGWKGLISDPDLNGSYRVNYGLELARRLLLQVNELGVPTATEFLDMVTGQFIADLISWGAIGARTTESQIHREMASALSCPVGFKNGTDGNTRIAVDAIRASRASHMFLSPDKDGQMTIYQTSGNPYGHIIMRGGKKPNYHAEDIAAACDTLHEFDLPEHLVVDFSHGNCQKQHRRQLEVCDDICQQIRNGSTAIAGIMAESFLREGTQKIISGQPLIYGQSITDPCLNWEDTEVLLEKLAAAVDSRF.

It belongs to the class-I DAHP synthase family.

It catalyses the reaction D-erythrose 4-phosphate + phosphoenolpyruvate + H2O = 7-phospho-2-dehydro-3-deoxy-D-arabino-heptonate + phosphate. Its pathway is metabolic intermediate biosynthesis; chorismate biosynthesis; chorismate from D-erythrose 4-phosphate and phosphoenolpyruvate: step 1/7. Its function is as follows. Stereospecific condensation of phosphoenolpyruvate (PEP) and D-erythrose-4-phosphate (E4P) giving rise to 3-deoxy-D-arabino-heptulosonate-7-phosphate (DAHP). The chain is Phospho-2-dehydro-3-deoxyheptonate aldolase, Trp-sensitive (aroH) from Salmonella typhimurium (strain LT2 / SGSC1412 / ATCC 700720).